The chain runs to 104 residues: PTS system lactose-specific EIIA component (104 aa).

The PTS EIIA type-3 domain maps to 4 to 102; the sequence is EEATLLGFEI…MKHLIELYKR (99 aa). Histidine 78 serves as the catalytic Tele-phosphohistidine intermediate. Histidine 78 is modified (phosphohistidine; by HPr). Residue aspartate 81 coordinates Mg(2+).

As to quaternary structure, homotrimer. The cofactor is Mg(2+).

It is found in the cytoplasm. In terms of biological role, the phosphoenolpyruvate-dependent sugar phosphotransferase system (sugar PTS), a major carbohydrate active transport system, catalyzes the phosphorylation of incoming sugar substrates concomitantly with their translocation across the cell membrane. The enzyme II LacEF PTS system is involved in lactose transport. In Streptococcus mutans serotype c (strain ATCC 700610 / UA159), this protein is PTS system lactose-specific EIIA component.